The sequence spans 1040 residues: Contactin-2 (1040 aa).

The signal sequence occupies residues 1 to 30 (MGAPARKRASLLLLLLATMALVSSPGWSFS). Ig-like C2-type domains lie at 39 to 130 (PVFE…AVLR), 135 to 224 (QEFS…SVFS), 241 to 324 (PSIK…GRII), 329 to 413 (PEWL…AELA), 419 to 506 (PDFR…GILS), and 511 to 605 (TKIT…ATVL). Disulfide bonds link cysteine 63-cysteine 113, cysteine 157-cysteine 209, cysteine 263-cysteine 308, and cysteine 350-cysteine 397. Residues asparagine 78, asparagine 200, and asparagine 206 are each glycosylated (N-linked (GlcNAc...) asparagine). 4 N-linked (GlcNAc...) asparagine glycosylation sites follow: asparagine 463, asparagine 479, asparagine 500, and asparagine 527. 4 Fibronectin type-III domains span residues 612-710 (PPGG…TKEA), 715-812 (APSG…SAEE), 817-913 (APAK…MKPP), and 917-1008 (PPGN…NGGT). An N-linked (GlcNAc...) asparagine glycan is attached at asparagine 777. The Cell attachment site signature appears at 796-798 (RGD). N-linked (GlcNAc...) asparagine glycans are attached at residues asparagine 832, asparagine 920, and asparagine 942. The disordered stretch occupies residues 897–922 (GTGPASPSADAMTMKPPPRRPPGNIS). The GPI-anchor amidated serine moiety is linked to residue serine 1014. The propeptide at 1015–1040 (SAVRPAHPGPVFSCMVILMLAGCQRL) is removed in mature form.

This sequence belongs to the immunoglobulin superfamily. Contactin family.

The protein resides in the cell membrane. In terms of biological role, in conjunction with another transmembrane protein, CNTNAP2, contributes to the organization of axonal domains at nodes of Ranvier by maintaining voltage-gated potassium channels at the juxtaparanodal region. The chain is Contactin-2 (Cntn2) from Mus musculus (Mouse).